Consider the following 360-residue polypeptide: Glutamate 5-kinase (360 aa).

Lys-7 is a binding site for ATP. Residues Ser-47, Asp-134, and Asn-146 each contribute to the substrate site. ATP contacts are provided by residues 166–167 and 210–216; these read TD and TGGISTK. A PUA domain is found at 275 to 356; the sequence is VGKITLDDGA…SSIIVVHRDV (82 aa).

It belongs to the glutamate 5-kinase family.

The protein localises to the cytoplasm. It carries out the reaction L-glutamate + ATP = L-glutamyl 5-phosphate + ADP. The protein operates within amino-acid biosynthesis; L-proline biosynthesis; L-glutamate 5-semialdehyde from L-glutamate: step 1/2. Functionally, catalyzes the transfer of a phosphate group to glutamate to form L-glutamate 5-phosphate. The protein is Glutamate 5-kinase of Prochlorococcus marinus (strain AS9601).